A 191-amino-acid polypeptide reads, in one-letter code: Protein Ves (191 aa).

Belongs to the Ves family.

This is Protein Ves from Escherichia coli O8 (strain IAI1).